Reading from the N-terminus, the 107-residue chain is MKTADSSLLADIREVNLSYLLLAQRMLRDDYAASMFRLGFSNEVADILMRLSPAQLVKLANSSSLLCRFRFDDYSLLSALTQDVLGGALQQAHATILLARQPVEELA.

It belongs to the FlhD family. In terms of assembly, homodimer; disulfide-linked. Forms a heterohexamer composed of two FlhC and four FlhD subunits. Each FlhC binds a FlhD dimer, forming a heterotrimer, and a hexamer assembles by dimerization of two heterotrimers.

The protein localises to the cytoplasm. Functions in complex with FlhC as a master transcriptional regulator that regulates transcription of several flagellar and non-flagellar operons by binding to their promoter region. Activates expression of class 2 flagellar genes, including fliA, which is a flagellum-specific sigma factor that turns on the class 3 genes. Also regulates genes whose products function in a variety of physiological pathways. This chain is Flagellar transcriptional regulator FlhD, found in Bordetella pertussis (strain Tohama I / ATCC BAA-589 / NCTC 13251).